The primary structure comprises 339 residues: Ketol-acid reductoisomerase (NADP(+)) (339 aa).

Positions 1-182 (MRVYYDRDAD…GGGRSGIIET (182 aa)) constitute a KARI N-terminal Rossmann domain. NADP(+)-binding positions include 24 to 27 (YGSQ), K48, S51, T53, and 83 to 86 (DELQ). H108 is an active-site residue. G134 contributes to the NADP(+) binding site. A KARI C-terminal knotted domain is found at 183–328 (NFKEECETDL…AKLRAMMPWI (146 aa)). Positions 191, 195, 227, and 231 each coordinate Mg(2+). S252 is a binding site for substrate.

This sequence belongs to the ketol-acid reductoisomerase family. Mg(2+) serves as cofactor.

The enzyme catalyses (2R)-2,3-dihydroxy-3-methylbutanoate + NADP(+) = (2S)-2-acetolactate + NADPH + H(+). The catalysed reaction is (2R,3R)-2,3-dihydroxy-3-methylpentanoate + NADP(+) = (S)-2-ethyl-2-hydroxy-3-oxobutanoate + NADPH + H(+). Its pathway is amino-acid biosynthesis; L-isoleucine biosynthesis; L-isoleucine from 2-oxobutanoate: step 2/4. It functions in the pathway amino-acid biosynthesis; L-valine biosynthesis; L-valine from pyruvate: step 2/4. Involved in the biosynthesis of branched-chain amino acids (BCAA). Catalyzes an alkyl-migration followed by a ketol-acid reduction of (S)-2-acetolactate (S2AL) to yield (R)-2,3-dihydroxy-isovalerate. In the isomerase reaction, S2AL is rearranged via a Mg-dependent methyl migration to produce 3-hydroxy-3-methyl-2-ketobutyrate (HMKB). In the reductase reaction, this 2-ketoacid undergoes a metal-dependent reduction by NADPH to yield (R)-2,3-dihydroxy-isovalerate. This Rhizobium meliloti (strain 1021) (Ensifer meliloti) protein is Ketol-acid reductoisomerase (NADP(+)).